The sequence spans 325 residues: Beta-ketoacyl-[acyl-carrier-protein] synthase III (325 aa).

Active-site residues include Cys-112 and His-250. The interval 251 to 255 (QANIR) is ACP-binding. Residue Asn-280 is part of the active site.

The protein belongs to the thiolase-like superfamily. FabH family. As to quaternary structure, homodimer.

It is found in the cytoplasm. It catalyses the reaction malonyl-[ACP] + acetyl-CoA + H(+) = 3-oxobutanoyl-[ACP] + CO2 + CoA. It functions in the pathway lipid metabolism; fatty acid biosynthesis. Its function is as follows. Catalyzes the condensation reaction of fatty acid synthesis by the addition to an acyl acceptor of two carbons from malonyl-ACP. Catalyzes the first condensation reaction which initiates fatty acid synthesis and may therefore play a role in governing the total rate of fatty acid production. Possesses both acetoacetyl-ACP synthase and acetyl transacylase activities. Its substrate specificity determines the biosynthesis of branched-chain and/or straight-chain of fatty acids. The polypeptide is Beta-ketoacyl-[acyl-carrier-protein] synthase III (Streptococcus mutans serotype c (strain ATCC 700610 / UA159)).